A 176-amino-acid polypeptide reads, in one-letter code: ATP-dependent protease subunit HslV (176 aa).

Thr-2 is an active-site residue. Gly-157, Cys-160, and Thr-163 together coordinate Na(+).

This sequence belongs to the peptidase T1B family. HslV subfamily. A double ring-shaped homohexamer of HslV is capped on each side by a ring-shaped HslU homohexamer. The assembly of the HslU/HslV complex is dependent on binding of ATP.

Its subcellular location is the cytoplasm. The catalysed reaction is ATP-dependent cleavage of peptide bonds with broad specificity.. Allosterically activated by HslU binding. Functionally, protease subunit of a proteasome-like degradation complex believed to be a general protein degrading machinery. The sequence is that of ATP-dependent protease subunit HslV from Pseudomonas putida (strain ATCC 47054 / DSM 6125 / CFBP 8728 / NCIMB 11950 / KT2440).